The chain runs to 563 residues: Glutamate--tRNA ligase (563 aa).

A disordered region spans residues 61 to 94 (PEEQQKEVESLGGLEQHTKKEEKPKGLPELKNTE). Positions 76-94 (QHTKKEEKPKGLPELKNTE) are enriched in basic and acidic residues. Residues 104-114 (PNPSGPLHIGH) carry the 'HIGH' region motif.

Belongs to the class-I aminoacyl-tRNA synthetase family. Glutamate--tRNA ligase type 2 subfamily.

The protein localises to the cytoplasm. It catalyses the reaction tRNA(Glu) + L-glutamate + ATP = L-glutamyl-tRNA(Glu) + AMP + diphosphate. In terms of biological role, catalyzes the attachment of glutamate to tRNA(Glu) in a two-step reaction: glutamate is first activated by ATP to form Glu-AMP and then transferred to the acceptor end of tRNA(Glu). This Methanosphaera stadtmanae (strain ATCC 43021 / DSM 3091 / JCM 11832 / MCB-3) protein is Glutamate--tRNA ligase.